The chain runs to 140 residues: MKVSARRKARELALQGVYSWQMSHNDIQQVELALATSNDMQKVDMAYFQALLRGVAHNASKLDATIKPYLGRLPEELDAIEKAILRIATLELTERIDVPYRVIINEAIELAKAFGAEESHKFINGALDKAVRTLRKDERD.

It belongs to the NusB family.

Functionally, involved in transcription antitermination. Required for transcription of ribosomal RNA (rRNA) genes. Binds specifically to the boxA antiterminator sequence of the ribosomal RNA (rrn) operons. In Alteromonas mediterranea (strain DSM 17117 / CIP 110805 / LMG 28347 / Deep ecotype), this protein is Transcription antitermination protein NusB.